A 739-amino-acid chain; its full sequence is MPNMEPTTKEIKEQKIYQEMGLTDSEYELVCSILGREPNYTETGLFSVMWSEHCSYKNSKPVLRKFPTEGKQVLQGPGEGAGIVDIGDGLGVAFKVESHNHPSYVEPYQGAATGVGGIIRDVFSMGARPIAMLNSLRFGELDTPHAKYLVSEVVAGIAGYGNSIGIPTVGGEIQFDPCYTKNPLVNAMCVGLIEAKDIQKGQAKGIGNPVMYVGAKTGRDGIHGATFASVEFSEEGEQQRSAVQVGDPFMEKLLLEACLDVIRDHSDILVGIQDMGAAGLVSSSSEMASKAGAGLELIMDDVPQRELNMTPYEMLLSESQERMLLCVKKGHVEEIQALFERYGLEAVVIGQVTDDKMYKIIHHGEVVANVPVDALAEDAPVYHKPSKEPARYQAFQEEKAFVPAMDDVVGVWKELLAQPTIASKRHIYEQYDYQVRTDTAVVPGSDAAIVRVRGTEKAIAMTTDCNSRYLYLDPEVGGAIAVAEAARNIVCSGGKPLAITDGLNFGNPEKPEIFWEIEKAADGISAACLELDTPVISGNVSLYNETDGTGIYPTPVIGMVGLVEDLAHITTQDFKNSGDVIFLIGETKAEYSGSELQKLQQGKISGRAPELDLATEKKYQQLLLTAIQEGLVASSHDLAEGGFGVALAEATFKAGLGADVEVPFALNQLFSESQSRFLVSVKPENEAAFAQLMELEKVYRLGVVTEDDTIRVKHKEDQVTAKTTELRSIWEGAIPCLLK.

Residue histidine 53 is part of the active site. 2 residues coordinate ATP: tyrosine 56 and lysine 95. Mg(2+) is bound at residue glutamate 97. Residues 98 to 101 (SHNH) and arginine 120 each bind substrate. Histidine 99 serves as the catalytic Proton acceptor. Aspartate 121 provides a ligand contact to Mg(2+). Position 244 (glutamine 244) interacts with substrate. Aspartate 274 serves as a coordination point for Mg(2+). A substrate-binding site is contributed by 318-320 (ESQ). ATP is bound by residues aspartate 501 and glycine 538. Asparagine 539 is a Mg(2+) binding site. Serine 541 contacts substrate.

This sequence belongs to the FGAMS family. In terms of assembly, monomer. Part of the FGAM synthase complex composed of 1 PurL, 1 PurQ and 2 PurS subunits.

The protein localises to the cytoplasm. It carries out the reaction N(2)-formyl-N(1)-(5-phospho-beta-D-ribosyl)glycinamide + L-glutamine + ATP + H2O = 2-formamido-N(1)-(5-O-phospho-beta-D-ribosyl)acetamidine + L-glutamate + ADP + phosphate + H(+). Its pathway is purine metabolism; IMP biosynthesis via de novo pathway; 5-amino-1-(5-phospho-D-ribosyl)imidazole from N(2)-formyl-N(1)-(5-phospho-D-ribosyl)glycinamide: step 1/2. Its function is as follows. Part of the phosphoribosylformylglycinamidine synthase complex involved in the purines biosynthetic pathway. Catalyzes the ATP-dependent conversion of formylglycinamide ribonucleotide (FGAR) and glutamine to yield formylglycinamidine ribonucleotide (FGAM) and glutamate. The FGAM synthase complex is composed of three subunits. PurQ produces an ammonia molecule by converting glutamine to glutamate. PurL transfers the ammonia molecule to FGAR to form FGAM in an ATP-dependent manner. PurS interacts with PurQ and PurL and is thought to assist in the transfer of the ammonia molecule from PurQ to PurL. The polypeptide is Phosphoribosylformylglycinamidine synthase subunit PurL (Listeria monocytogenes serotype 4a (strain HCC23)).